Reading from the N-terminus, the 841-residue chain is Follistatin-related protein 4 (841 aa).

Residues 1-22 (MKPGGFWPHLALLGVSLPAVLG) form the signal peptide. The interval 29-54 (SRSPNMVPGESQAEETRGFEVTRREG) is disordered. Basic and acidic residues predominate over residues 42–54 (EETRGFEVTRREG). Residues 80 to 134 (TTGQPSCQCLEVCRPRYMPVCGSDGRLYGNHCELRRAACLLGKRIVSVHSKDCFL) enclose the Kazal-like domain. Cystine bridges form between Cys-86-Cys-118, Cys-92-Cys-111, and Cys-100-Cys-132. EF-hand domains are found at residues 173–208 (QKRL…EQDM) and 225–247 (DYNS…IQLS). Residues Asp-186, Asp-188, Asn-190, His-192, Glu-197, Asp-225, Asn-227, Asp-229, Ser-231, and Glu-236 each coordinate Ca(2+). Ig-like domains follow at residues 250–336 (PEDK…VLQV) and 340–425 (PVIR…EDIS). 2 cysteine pairs are disulfide-bonded: Cys-269–Cys-320 and Cys-361–Cys-412. Asn-317 carries N-linked (GlcNAc...) asparagine glycosylation.

The protein localises to the secreted. The chain is Follistatin-related protein 4 (Fstl4) from Mus musculus (Mouse).